Consider the following 376-residue polypeptide: Respiration factor 1 (376 aa).

Disordered regions lie at residues 1 to 23 (MKDL…DNRG), 88 to 107 (VNVT…NSTK), 258 to 279 (FKEK…TGSS), and 347 to 376 (GVNE…QHTN). The span at 354-376 (NSSNLNNSNSGTPHNHNQNQHTN) shows a compositional bias: low complexity.

Its subcellular location is the cytoplasm. The protein localises to the nucleus. The protein resides in the mitochondrion. Mitochondrial and nuclear transcriptional activator required for respiratory growth. This Saccharomyces cerevisiae (strain YJM789) (Baker's yeast) protein is Respiration factor 1 (RSF1).